The chain runs to 494 residues: MELLGFTTLALVVSVTCLSLLSVWTKLRTRGRLPPGPTPLPIIGNLLQLNLKDIPASLSKLAKEYGPVYTLYFGTSPTVVLHGYDVVKEALLQQGDEFLGRGPLPIIEDTHKGYGLIFSNGERWKVMRRFSLMTLRNFGMGKRSLEERVQEEARCLVEELQKTKAQPFDPTFILACAPCNVICSILFNDRFQYNDKTFLNLMDLLNKNFQQVNSVWCQMYNLWPTIIKYLPGKHIEFAKRIDDVKNFILEKVKEHQKSLDPANPRDYIDCFLSKIEEEKDNLKSEFHLENLAVCGSNLFTAGTETTSTTLRFGLLLLMKYPEVQAKVHEELDRVIGRHQPPSMKDKMKLPYTDAVLHEIQRYITLLPSSLPHAVVQDTKFRDYVIPKGTTVLPMLSSVMLDQKEFANPEKFDPGHFLDKNGCFKKTDYFVPFSLGKRACVGESLARMELFLFFTTLLQKFSLKTLVEPKDLDIKPITTGIINLPPPYKLCLVPR.

Position 131 is a phosphoserine (S131). N6-acetyllysine occurs at positions 253 and 379. C439 serves as a coordination point for heme.

The protein belongs to the cytochrome P450 family. It depends on heme as a cofactor. In terms of tissue distribution, expressed in kidney and liver. Expressed in cortical tubules of kidney (at protein level).

The protein localises to the endoplasmic reticulum membrane. It is found in the microsome membrane. The catalysed reaction is (5Z,8Z,11Z,14Z)-eicosatetraenoate + reduced [NADPH--hemoprotein reductase] + O2 = (8R,9S)-epoxy-(5Z,11Z,14Z)-eicosatrienoate + oxidized [NADPH--hemoprotein reductase] + H2O + H(+). It catalyses the reaction (5Z,8Z,11Z,14Z)-eicosatetraenoate + reduced [NADPH--hemoprotein reductase] + O2 = (11R,12S)-epoxy-(5Z,8Z,14Z)-eicosatrienoate + oxidized [NADPH--hemoprotein reductase] + H2O + H(+). The enzyme catalyses (5Z,8Z,11Z,14Z)-eicosatetraenoate + reduced [NADPH--hemoprotein reductase] + O2 = (11S,12R)-epoxy-(5Z,8Z,14Z)-eicosatrienoate + oxidized [NADPH--hemoprotein reductase] + H2O + H(+). It carries out the reaction (5Z,8Z,11Z,14Z)-eicosatetraenoate + reduced [NADPH--hemoprotein reductase] + O2 = (14R,15S)-epoxy-(5Z,8Z,11Z)-eicosatrienoate + oxidized [NADPH--hemoprotein reductase] + H2O + H(+). The catalysed reaction is (5Z,8Z,11Z,14Z)-eicosatetraenoate + reduced [NADPH--hemoprotein reductase] + O2 = (14S,15R)-epoxy-(5Z,8Z,11Z)-eicosatrienoate + oxidized [NADPH--hemoprotein reductase] + H2O + H(+). It catalyses the reaction (5Z,8Z,11Z,14Z,17Z)-eicosapentaenoate + reduced [NADPH--hemoprotein reductase] + O2 = 8,9-epoxy-(5Z,11Z,14Z,17Z)-eicosatetraenoate + oxidized [NADPH--hemoprotein reductase] + H2O + H(+). The enzyme catalyses (5Z,8Z,11Z,14Z,17Z)-eicosapentaenoate + reduced [NADPH--hemoprotein reductase] + O2 = 11,12-epoxy-(5Z,8Z,14Z,17Z)-eicosatetraenoate + oxidized [NADPH--hemoprotein reductase] + H2O + H(+). It carries out the reaction (5Z,8Z,11Z,14Z,17Z)-eicosapentaenoate + reduced [NADPH--hemoprotein reductase] + O2 = 14,15-epoxy-(5Z,8Z,11Z,17Z)-eicosatetraenoate + oxidized [NADPH--hemoprotein reductase] + H2O + H(+). The catalysed reaction is (5Z,8Z,11Z,14Z,17Z)-eicosapentaenoate + reduced [NADPH--hemoprotein reductase] + O2 = (17R,18S)-epoxy-(5Z,8Z,11Z,14Z)-eicosatetraenoate + oxidized [NADPH--hemoprotein reductase] + H2O + H(+). It catalyses the reaction (5Z,8Z,11Z,14Z,17Z)-eicosapentaenoate + reduced [NADPH--hemoprotein reductase] + O2 = (17S,18R)-epoxy-(5Z,8Z,11Z,14Z)-eicosatetraenoate + oxidized [NADPH--hemoprotein reductase] + H2O + H(+). The enzyme catalyses 20-hydroxy-(5Z,8Z,11Z,14Z)-eicosatetraenoate + reduced [NADPH--hemoprotein reductase] + O2 = 20-hydroxy-8,9-epoxy-(5Z,11Z,14Z)-eicosatrienoate + oxidized [NADPH--hemoprotein reductase] + H2O + H(+). It participates in lipid metabolism; arachidonate metabolism. In terms of biological role, a cytochrome P450 monooxygenase involved in polyunsaturated fatty acids (PUFAs) metabolism and signaling. Catalyzes preferentially the epoxidation of double bonds of PUFAs. Converts arachidonic acid (ARA, C20:4(n-6)) primarily to stereospecific products 8R,9S-, 11R,12S-, and 14S,15R-EET. Plays a major role in the formation of EETs and hydroxy-EETs (HEETs) in kidney. Via EETs may inhibit the epithelial sodium channels (ENaCs) in nephron segments, preventing excessive sodium absorption during high dietary salt intake. Participates in the formation of anti-inflammatory hydroxyepoxyeicosatrienoic acids (HEETs) by converting 20-hydroxyeicosatetraenoic acid (20-HETE) to 20,8,9-HEET, an activator of PPARA. Metabolizes eicosapentaenoic acid (EPA, C20:5(n-3)) to epoxyeicosatetraenoic acid (EETeTr) regioisomers, 8,9-, 11,12-, 14,15-, and 17,18-EETeTr, preferentially producing 17R,18S enantiomer. Mechanistically, uses molecular oxygen inserting one oxygen atom into a substrate, and reducing the second into a water molecule, with two electrons provided by NADPH via cytochrome P450 reductase (NADPH--hemoprotein reductase). The protein is Cytochrome P450 2C23 of Rattus norvegicus (Rat).